The following is a 158-amino-acid chain: Regulator of sigma D (158 aa).

The protein belongs to the Rsd/AlgQ family. As to quaternary structure, interacts with RpoD.

It is found in the cytoplasm. Its function is as follows. Binds RpoD and negatively regulates RpoD-mediated transcription activation by preventing the interaction between the primary sigma factor RpoD with the catalytic core of the RNA polymerase and with promoter DNA. May be involved in replacement of the RNA polymerase sigma subunit from RpoD to RpoS during the transition from exponential growth to the stationary phase. This chain is Regulator of sigma D, found in Escherichia coli (strain SMS-3-5 / SECEC).